The following is a 145-amino-acid chain: Flagellar assembly factor FliW (145 aa).

This sequence belongs to the FliW family. Interacts with translational regulator CsrA and flagellin(s).

It localises to the cytoplasm. Functionally, acts as an anti-CsrA protein, binds CsrA and prevents it from repressing translation of its target genes, one of which is flagellin. Binds to flagellin and participates in the assembly of the flagellum. In Thermosipho africanus (strain TCF52B), this protein is Flagellar assembly factor FliW.